The sequence spans 213 residues: Ribosomal RNA small subunit methyltransferase G (213 aa).

S-adenosyl-L-methionine is bound by residues Gly-72, Phe-77, 125–126 (IE), and Arg-141.

The protein belongs to the methyltransferase superfamily. RNA methyltransferase RsmG family.

The protein resides in the cytoplasm. It carries out the reaction guanosine(527) in 16S rRNA + S-adenosyl-L-methionine = N(7)-methylguanosine(527) in 16S rRNA + S-adenosyl-L-homocysteine. Specifically methylates the N7 position of guanine in position 527 of 16S rRNA. The protein is Ribosomal RNA small subunit methyltransferase G of Sinorhizobium medicae (strain WSM419) (Ensifer medicae).